A 362-amino-acid polypeptide reads, in one-letter code: Methylthioribose-1-phosphate isomerase (362 aa).

Residues Arg49–Ala51, Arg89, and Gln201 each bind substrate. Asp242 serves as the catalytic Proton donor. A substrate-binding site is contributed by Asn252–Lys253.

The protein belongs to the eIF-2B alpha/beta/delta subunits family. MtnA subfamily.

The catalysed reaction is 5-(methylsulfanyl)-alpha-D-ribose 1-phosphate = 5-(methylsulfanyl)-D-ribulose 1-phosphate. It participates in amino-acid biosynthesis; L-methionine biosynthesis via salvage pathway; L-methionine from S-methyl-5-thio-alpha-D-ribose 1-phosphate: step 1/6. Functionally, catalyzes the interconversion of methylthioribose-1-phosphate (MTR-1-P) into methylthioribulose-1-phosphate (MTRu-1-P). The protein is Methylthioribose-1-phosphate isomerase of Leptospira borgpetersenii serovar Hardjo-bovis (strain JB197).